The following is a 295-amino-acid chain: UDP-N-acetylenolpyruvoylglucosamine reductase (295 aa).

The FAD-binding PCMH-type domain occupies 23-188; it reads QVGGPADFLA…ISAKFALKPG (166 aa). Arg-167 is a catalytic residue. Ser-217 (proton donor) is an active-site residue. The active site involves Glu-287.

The protein belongs to the MurB family. FAD serves as cofactor.

The protein localises to the cytoplasm. The enzyme catalyses UDP-N-acetyl-alpha-D-muramate + NADP(+) = UDP-N-acetyl-3-O-(1-carboxyvinyl)-alpha-D-glucosamine + NADPH + H(+). The protein operates within cell wall biogenesis; peptidoglycan biosynthesis. Functionally, cell wall formation. The chain is UDP-N-acetylenolpyruvoylglucosamine reductase from Streptococcus equi subsp. zooepidemicus (strain H70).